Consider the following 614-residue polypeptide: Glutamine--fructose-6-phosphate aminotransferase [isomerizing] (614 aa).

The Nucleophile; for GATase activity role is filled by cysteine 2. The Glutamine amidotransferase type-2 domain maps to 2–221 (CGIVGYIGKR…DGEIAVINRG (220 aa)). SIS domains lie at 291–430 (YKEK…EKGT) and 463–604 (LSKT…VDQP). Lysine 609 (for Fru-6P isomerization activity) is an active-site residue.

Homodimer.

It localises to the cytoplasm. The catalysed reaction is D-fructose 6-phosphate + L-glutamine = D-glucosamine 6-phosphate + L-glutamate. Catalyzes the first step in hexosamine metabolism, converting fructose-6P into glucosamine-6P using glutamine as a nitrogen source. The polypeptide is Glutamine--fructose-6-phosphate aminotransferase [isomerizing] (Bacteroides thetaiotaomicron (strain ATCC 29148 / DSM 2079 / JCM 5827 / CCUG 10774 / NCTC 10582 / VPI-5482 / E50)).